A 407-amino-acid chain; its full sequence is MSGNIAVDPDKLEQLANDVVTELTDMENKYKDLHVELGQMILQCDPRYSSCFSGVGDAWSSGKALVTKLSDNEIFIRKTGDKFVEQDDILRKLYNAYDKYGTMTSLTALMLTQGKYYGLGLTKFVKQPSGLHTAQHSKLLLDISRAVDSSRYQKAARVLLNPKYLLKKTNRPFSDLVHKKFTKYFPQDTVDFSNSVRSYTKGFLNEAGVRSTLKDVGKTGLRFAKGNAITATLITGATETFGAGVKIAENYAKYQDKPEVLKRENAKAVGNAVNNTIFVAGGATAGAVIGGAIGSFAGPVGTVLLGAAGSYIGGVVGEQIAKYTAGFAEKAALKLKEPIHAVVDTAKKGLESAGKVVKSVNDGIDAANKSIHKGIDSAKKGMEKAKKTADSLIHGATHFLKGKFSFG.

A coiled-coil region spans residues 10 to 37; the sequence is DKLEQLANDVVTELTDMENKYKDLHVEL.

This is an uncharacterized protein from Bacillus subtilis (strain 168).